The sequence spans 466 residues: Peptidoglycan-N-acetylglucosamine deacetylase PgdA (466 aa).

The Cytoplasmic segment spans residues M1–W5. A helical transmembrane segment spans residues I6 to F26. At Q27–K466 the chain is on the extracellular side. Residues K266–V440 form the NodB homology domain. D273 serves as the catalytic Proton acceptor. Zn(2+) contacts are provided by D274, H324, and H328. Y365 serves as a coordination point for substrate. H415 (proton donor) is an active-site residue.

As to quaternary structure, homodimer. Interacts (via transmembrane domain) with PbpA1 (via transmembrane domain); the interaction is important for the peptidoglycan N-deacetylase function of this protein. It depends on Zn(2+) as a cofactor.

The protein resides in the cell membrane. The protein localises to the secreted. It is found in the cell wall. The catalysed reaction is peptidoglycan-N-acetyl-D-glucosamine + H2O = peptidoglycan-D-glucosamine + acetate.. Catalyzes the deacetylation of N-acetylglucosamine (GlcNAc) residues in peptidoglycan (PG). Also deacetylates N-acetylated PG. Does not deacetylate N-acetylmuramic acid. Confers host lysozyme resistance. Critical for virulence and escape from innate immune response of the host. Required for intracellular survival of bacteria in macrophages of the host. Required for successful host colonization. Controls the production of inflammatory mediators in the bone marrow derived macrophages (BMMs) of the infected mouse. Suppresses Toll-like receptor 2 (TLR2)-dependent secretion of interleukin 6 (IL-6) and interferon-beta (IFN-beta) in the macrophages of the infected mouse. May decrease accessibility of pattern recognition receptors (PRRs) such as nucleotide-binding oligomerization domain protein (NOD) 1 of the host to the bacterial cell wall components. Protects cells from autolysis induced by lysozyme or by other autolysis-inducing agents. The polypeptide is Peptidoglycan-N-acetylglucosamine deacetylase PgdA (Listeria monocytogenes serotype 1/2a (strain 10403S)).